The following is a 444-amino-acid chain: Glutamyl-tRNA reductase (444 aa).

Residues 49 to 52 (TCNR), S109, 114 to 116 (ETQ), and Q120 each bind substrate. C50 (nucleophile) is an active-site residue. 189–194 (GAGKMG) contacts NADP(+).

It belongs to the glutamyl-tRNA reductase family. In terms of assembly, homodimer.

The enzyme catalyses (S)-4-amino-5-oxopentanoate + tRNA(Glu) + NADP(+) = L-glutamyl-tRNA(Glu) + NADPH + H(+). It participates in porphyrin-containing compound metabolism; protoporphyrin-IX biosynthesis; 5-aminolevulinate from L-glutamyl-tRNA(Glu): step 1/2. Catalyzes the NADPH-dependent reduction of glutamyl-tRNA(Glu) to glutamate 1-semialdehyde (GSA). The sequence is that of Glutamyl-tRNA reductase from Bacillus cereus (strain G9842).